A 349-amino-acid chain; its full sequence is Green-sensitive opsin-3 (349 aa).

The Extracellular portion of the chain corresponds to M1–Q36. N2 and N15 each carry an N-linked (GlcNAc...) asparagine glycan. Residues F37–V61 form a helical membrane-spanning segment. At T62–N73 the chain is on the cytoplasmic side. Residues F74–I99 form a helical membrane-spanning segment. The Extracellular portion of the chain corresponds to N100–E113. Residues C110 and C187 are joined by a disulfide bond. A helical transmembrane segment spans residues G114–I133. The Cytoplasmic portion of the chain corresponds to E134–H152. A helical membrane pass occupies residues A153–S176. At R177–S202 the chain is on the extracellular side. N-linked (GlcNAc...) asparagine glycosylation occurs at N200. The chain crosses the membrane as a helical span at residues Y203 to V230. The Cytoplasmic segment spans residues K231–R252. Residues M253–F276 traverse the membrane as a helical segment. Residues F277–S284 are Extracellular-facing. A helical transmembrane segment spans residues A285–L309. K296 is modified (N6-(retinylidene)lysine). The Cytoplasmic portion of the chain corresponds to N310–A349. The interval G329–A349 is disordered. Low complexity predominate over residues S334–A349.

It belongs to the G-protein coupled receptor 1 family. Opsin subfamily. Phosphorylated on some or all of the serine and threonine residues present in the C-terminal region.

The protein resides in the membrane. Functionally, visual pigments are the light-absorbing molecules that mediate vision. They consist of an apoprotein, opsin, covalently linked to cis-retinal. The polypeptide is Green-sensitive opsin-3 (opn1mw3) (Danio rerio (Zebrafish)).